The chain runs to 190 residues: Holliday junction branch migration complex subunit RuvA (190 aa).

The tract at residues 1 to 64 (MIGKLTGTLL…EDAQLLYGFG (64 aa)) is domain I. The domain II stretch occupies residues 65–137 (TAQERQAFRE…LKGKLGADVG (73 aa)). A flexible linker region spans residues 137–141 (GVRAH). The tract at residues 142-190 (AANDNQADILQALLALGYNDKEAAAALKALPADVGVSEGIKLALKSLSK) is domain III.

The protein belongs to the RuvA family. In terms of assembly, homotetramer. Forms an RuvA(8)-RuvB(12)-Holliday junction (HJ) complex. HJ DNA is sandwiched between 2 RuvA tetramers; dsDNA enters through RuvA and exits via RuvB. An RuvB hexamer assembles on each DNA strand where it exits the tetramer. Each RuvB hexamer is contacted by two RuvA subunits (via domain III) on 2 adjacent RuvB subunits; this complex drives branch migration. In the full resolvosome a probable DNA-RuvA(4)-RuvB(12)-RuvC(2) complex forms which resolves the HJ.

It localises to the cytoplasm. Functionally, the RuvA-RuvB-RuvC complex processes Holliday junction (HJ) DNA during genetic recombination and DNA repair, while the RuvA-RuvB complex plays an important role in the rescue of blocked DNA replication forks via replication fork reversal (RFR). RuvA specifically binds to HJ cruciform DNA, conferring on it an open structure. The RuvB hexamer acts as an ATP-dependent pump, pulling dsDNA into and through the RuvAB complex. HJ branch migration allows RuvC to scan DNA until it finds its consensus sequence, where it cleaves and resolves the cruciform DNA. The chain is Holliday junction branch migration complex subunit RuvA from Acidovorax sp. (strain JS42).